A 594-amino-acid polypeptide reads, in one-letter code: Beta-mannosyltransferase 3 (594 aa).

The Cytoplasmic segment spans residues 1 to 6; the sequence is MRIRSN. The chain crosses the membrane as a helical span at residues 7 to 27; it reads VLLLSTAGALALVWFAVVFSW. Topologically, residues 28-594 are extracellular; it reads DDKSIFGIPT…KDEVKDTKAK (567 aa). An N-linked (GlcNAc...) asparagine glycan is attached at N305. A coiled-coil region spans residues 512 to 594; sequence VTRGEEDRLK…KDEVKDTKAK (83 aa). Positions 517–558 are enriched in basic and acidic residues; that stretch reads EDRLKNKEKERKIEEKRKKEEERKKKEEEKKKKEEEEKKKKE. Positions 517 to 564 are disordered; the sequence is EDRLKNKEKERKIEEKRKKEEERKKKEEEKKKKEEEEKKKKEEEEEEE.

The protein belongs to the BMT family.

It is found in the membrane. Its function is as follows. Beta-mannosyltransferase involved in cell wall biosynthesis. The chain is Beta-mannosyltransferase 3 (BMT3) from Komagataella phaffii (strain ATCC 76273 / CBS 7435 / CECT 11047 / NRRL Y-11430 / Wegner 21-1) (Yeast).